The sequence spans 417 residues: uncharacterized protein (417 aa).

The next 10 helical transmembrane spans lie at 21 to 41 (ISSL…AFQL), 50 to 70 (LLMM…GLLA), 88 to 108 (LTVI…LLSV), 166 to 186 (SVFY…FFLP), 217 to 237 (MPLL…LQIG), 255 to 275 (LAGW…AITG), 283 to 303 (LLYF…APFL), 308 to 328 (IAGI…FGLV), 351 to 371 (AIQS…GVLA), and 373 to 393 (WIGV…IGLI).

The protein belongs to the major facilitator superfamily. TCR/Tet family.

It localises to the cell membrane. This is an uncharacterized protein from Bacillus subtilis (strain 168).